The chain runs to 432 residues: Vacuolar protein sorting-associated protein 38 (432 aa).

The N-linked (GlcNAc...) asparagine glycan is linked to N20. The stretch at 216–287 (LDTYQENIKM…KEAIEKLQKK (72 aa)) forms a coiled coil. A helical membrane pass occupies residues 348 to 365 (IINAMLGFYSLFIVIYSY).

This sequence belongs to the VPS38 family. Component of the VPS34 PI3-kinase complex II composed of VPS15, VPS30, VPS34 and VPS38.

The protein localises to the golgi apparatus. It is found in the trans-Golgi network membrane. The protein resides in the endosome membrane. Involved in endosome-to-Golgi retrograde transport as part of the VPS34 PI3-kinase complex II. This complex is required for the endosome-to-Golgi retrieval of PEP1 and KEX2, and the recruitment of VPS5 and VPS7, two components of the retromer complex, to endosomal membranes (probably through generating a specific pool of phosphatidylinositol 3-phosphate allowing the recruitment of the retromer complex proteins to the endosome). Mediates the interaction between VPS30 and the VPS34-VPS15 core complex, leading to the recruitment of VPS30 to the membrane. This Candida glabrata (strain ATCC 2001 / BCRC 20586 / JCM 3761 / NBRC 0622 / NRRL Y-65 / CBS 138) (Yeast) protein is Vacuolar protein sorting-associated protein 38.